We begin with the raw amino-acid sequence, 552 residues long: Olefin beta-lactone synthetase (552 aa).

Residues 182–190, 316–321, Asp425, and Arg440 contribute to the ATP site; these read TSGSTGVPK and TPYGAT.

Belongs to the ATP-dependent AMP-binding enzyme family. In terms of assembly, monomer.

The catalysed reaction is a (2R,3S)-2-alkyl-3-hydroxyalkanoate + ATP = a cis-3-alkyl-4-alkyloxetan-2-one + AMP + diphosphate. Its function is as follows. Involved in olefin biosynthesis. Catalyzes the conversion of beta-hydroxy acid substrates to beta-lactones in the presence of ATP. Can use all four stereoisomers of 2-hexyl-3-hydroxydecanoic acid. The sequence is that of Olefin beta-lactone synthetase from Stenotrophomonas maltophilia (strain K279a).